The primary structure comprises 326 residues: Putative F-box protein At3g22710 (326 aa).

The F-box domain maps to 1–50 (MTMPDLPPDLVEEILSRVPATSVKKLRSTCTQWNAIFKDERFTEKHFSKA).

This Arabidopsis thaliana (Mouse-ear cress) protein is Putative F-box protein At3g22710.